A 188-amino-acid chain; its full sequence is PRA1 family protein 3 (188 aa).

Met1 is modified (N-acetylmethionine). The Cytoplasmic segment spans residues Met1–Arg35. The next 2 membrane-spanning stretches (helical) occupy residues Val36–Ser56 and Val57–Phe77. Topologically, residues Thr78–Met93 are cytoplasmic. 2 helical membrane passes run Lys94–Ser114 and Leu115–Ile135. The tract at residues Met103 to Gly117 is required for homodimer formation and heterodimer formation with ARL6IP1. Over His136–Glu188 the chain is Cytoplasmic. Positions His136 to Glu188 are targeting to endoplasmic reticulum membrane.

It belongs to the PRA1 family. In terms of assembly, homodimer. Heterodimer with ARL6IP1. Forms multimers. Interacts with ARL6. Interacts with prenylated RAB1A and RAB3A. Interacts with SLC1A1/EAAC1. Interacts with RTN2 (via first transmembrane domain). Does not interact with VAMP1, VAMP2 or VAMP3.

The protein resides in the endoplasmic reticulum membrane. It is found in the cell membrane. The protein localises to the cytoplasm. It localises to the cytoskeleton. Its function is as follows. Regulates intracellular concentrations of taurine and glutamate. Negatively modulates SLC1A1/EAAC1 glutamate transport activity by decreasing its affinity for glutamate in a PKC activity-dependent manner. Plays a role in the retention of SLC1A1/EAAC1 in the endoplasmic reticulum. This is PRA1 family protein 3 (ARL6IP5) from Bos taurus (Bovine).